Here is a 947-residue protein sequence, read N- to C-terminus: Translation initiation factor IF-2 (947 aa).

The tract at residues 55–361 (TKDAQAGSAK…PVTERKFHEL (307 aa)) is disordered. A compositionally biased stretch (basic and acidic residues) spans 63–73 (AKDKQVAEQKA). The segment covering 76-90 (AKATTPQPAAATQEA) has biased composition (low complexity). 3 stretches are compositionally biased toward basic and acidic residues: residues 103–116 (FKAE…EQAA), 125–134 (SNDRKSDYRQ), and 170–183 (NDGH…DKNR). The span at 190–204 (RQQDTGRQGQTQAGA) shows a compositional bias: low complexity. 3 stretches are compositionally biased toward basic and acidic residues: residues 225–249 (ARQR…RQEA), 257–267 (QTEDKKHREAS), and 294–311 (NRPD…DGQK). Over residues 316–334 (SWNSQNQVRNQKNSNWNNN) the composition is skewed to low complexity. Residues 335 to 345 (KKNKKGKHHKN) show a composition bias toward basic residues. A tr-type G domain is found at 448–617 (ERAPVVTIMG…LLVAEVEELK (170 aa)). Residues 457–464 (GHVDHGKT) form a G1 region. Residue 457-464 (GHVDHGKT) participates in GTP binding. A G2 region spans residues 482-486 (GITQH). The interval 503–506 (DTPG) is G3. GTP is bound by residues 503–507 (DTPGH) and 557–560 (NKID). The tract at residues 557 to 560 (NKID) is G4. Residues 593-595 (SAK) form a G5 region.

This sequence belongs to the TRAFAC class translation factor GTPase superfamily. Classic translation factor GTPase family. IF-2 subfamily.

Its subcellular location is the cytoplasm. Functionally, one of the essential components for the initiation of protein synthesis. Protects formylmethionyl-tRNA from spontaneous hydrolysis and promotes its binding to the 30S ribosomal subunits. Also involved in the hydrolysis of GTP during the formation of the 70S ribosomal complex. In Streptococcus equi subsp. zooepidemicus (strain MGCS10565), this protein is Translation initiation factor IF-2.